The primary structure comprises 422 residues: Light-independent protochlorophyllide reductase subunit N (422 aa).

The [4Fe-4S] cluster site is built by cysteine 26, cysteine 51, and cysteine 112.

The protein belongs to the BchN/ChlN family. As to quaternary structure, protochlorophyllide reductase is composed of three subunits; BchL, BchN and BchB. Forms a heterotetramer of two BchB and two BchN subunits. It depends on [4Fe-4S] cluster as a cofactor.

The catalysed reaction is chlorophyllide a + oxidized 2[4Fe-4S]-[ferredoxin] + 2 ADP + 2 phosphate = protochlorophyllide a + reduced 2[4Fe-4S]-[ferredoxin] + 2 ATP + 2 H2O. It participates in porphyrin-containing compound metabolism; bacteriochlorophyll biosynthesis (light-independent). Functionally, component of the dark-operative protochlorophyllide reductase (DPOR) that uses Mg-ATP and reduced ferredoxin to reduce ring D of protochlorophyllide (Pchlide) to form chlorophyllide a (Chlide). This reaction is light-independent. The NB-protein (BchN-BchB) is the catalytic component of the complex. This chain is Light-independent protochlorophyllide reductase subunit N, found in Acidiphilium rubrum.